The sequence spans 218 residues: Pyridoxine/pyridoxamine 5'-phosphate oxidase (218 aa).

Substrate is bound by residues 14 to 17 and K72; that span reads RREY. FMN contacts are provided by residues 67–72, 82–83, R88, K89, and Q111; these read RIVLLK and YT. Residues Y129, R133, and S137 each coordinate substrate. FMN-binding positions include 146-147 and W191; that span reads QS. Residue 197–199 coordinates substrate; that stretch reads RLH. R201 contributes to the FMN binding site.

This sequence belongs to the pyridoxamine 5'-phosphate oxidase family. In terms of assembly, homodimer. It depends on FMN as a cofactor.

The enzyme catalyses pyridoxamine 5'-phosphate + O2 + H2O = pyridoxal 5'-phosphate + H2O2 + NH4(+). The catalysed reaction is pyridoxine 5'-phosphate + O2 = pyridoxal 5'-phosphate + H2O2. It participates in cofactor metabolism; pyridoxal 5'-phosphate salvage; pyridoxal 5'-phosphate from pyridoxamine 5'-phosphate: step 1/1. It functions in the pathway cofactor metabolism; pyridoxal 5'-phosphate salvage; pyridoxal 5'-phosphate from pyridoxine 5'-phosphate: step 1/1. Functionally, catalyzes the oxidation of either pyridoxine 5'-phosphate (PNP) or pyridoxamine 5'-phosphate (PMP) into pyridoxal 5'-phosphate (PLP). This is Pyridoxine/pyridoxamine 5'-phosphate oxidase from Escherichia fergusonii (strain ATCC 35469 / DSM 13698 / CCUG 18766 / IAM 14443 / JCM 21226 / LMG 7866 / NBRC 102419 / NCTC 12128 / CDC 0568-73).